The primary structure comprises 1543 residues: Rho guanine nucleotide exchange factor 12 (1543 aa).

Residues M1–R62 form a disordered region. Position 2 is an N-acetylserine (S2). The segment covering S28 to D45 has biased composition (basic and acidic residues). S41 is subject to Phosphoserine. In terms of domain architecture, PDZ spans C72–S151. The stretch at V194 to D262 forms a coiled coil. Residues A281–D355 are disordered. Positions D293 to S312 are enriched in low complexity. S309 bears the Phosphoserine mark. Residues S313 to G329 are compositionally biased toward basic and acidic residues. Position 341 is a phosphoserine (S341). An RGSL domain is found at G367 to K558. Positions F574–V710 are disordered. A compositionally biased stretch (basic and acidic residues) spans M582–G592. Residue S637 is modified to Phosphoserine. Low complexity predominate over residues A663–S676. The residue at position 736 (T736) is a Phosphothreonine. The DH domain occupies K787 to A977. A coiled-coil region spans residues A981–Y1004. The PH domain maps to K1019–A1132. Residues Q1137–E1158 form a disordered region. 3 positions are modified to phosphoserine: S1288, S1327, and S1377. Disordered stretches follow at residues E1386–K1405 and P1441–S1468. The segment covering S1450–N1460 has biased composition (polar residues). A phosphoserine mark is found at S1457 and S1540.

Interacts with GNA12 and GNA13, probably through the RGS-like domain, with RHOA, PLXNB1 and PLXNB2, and through its PDZ domain with IGF1R beta subunit. Interacts with GCSAM. Found in a complex with ARHGEF11 and ARHGEF12; binding to ARHGEF11 and ARHGEF12 enhances CDC42 GEF activity of PLEKHG4B, and PLEKHG4B, in turn, inhibits ARHGEF11- and ARHGEF12-mediated RHOA activation. In terms of tissue distribution, expressed in brain, predominantly in neuronal cell bodies.

The protein localises to the cytoplasm. The protein resides in the membrane. May play a role in the regulation of RhoA GTPase by guanine nucleotide-binding alpha-12 (GNA12) and alpha-13 (GNA13). Acts as guanine nucleotide exchange factor (GEF) for RhoA GTPase and may act as GTPase-activating protein (GAP) for GNA12 and GNA13. The protein is Rho guanine nucleotide exchange factor 12 (Arhgef12) of Mus musculus (Mouse).